A 42-amino-acid polypeptide reads, in one-letter code: Cytochrome b559 subunit beta (42 aa).

A helical membrane pass occupies residues 17–33; it reads WLAIHGLAVPTVFFLGA. Residue His-21 coordinates heme.

The protein belongs to the PsbE/PsbF family. As to quaternary structure, heterodimer of an alpha subunit and a beta subunit. PSII is composed of 1 copy each of membrane proteins PsbA, PsbB, PsbC, PsbD, PsbE, PsbF, PsbH, PsbI, PsbJ, PsbK, PsbL, PsbM, PsbT, PsbX, PsbY, PsbZ, Psb30/Ycf12, at least 3 peripheral proteins of the oxygen-evolving complex and a large number of cofactors. It forms dimeric complexes. Heme b is required as a cofactor.

The protein resides in the plastid. The protein localises to the chloroplast thylakoid membrane. In terms of biological role, this b-type cytochrome is tightly associated with the reaction center of photosystem II (PSII). PSII is a light-driven water:plastoquinone oxidoreductase that uses light energy to abstract electrons from H(2)O, generating O(2) and a proton gradient subsequently used for ATP formation. It consists of a core antenna complex that captures photons, and an electron transfer chain that converts photonic excitation into a charge separation. This chain is Cytochrome b559 subunit beta, found in Guillardia theta (Cryptophyte).